Here is a 513-residue protein sequence, read N- to C-terminus: ATP synthase subunit alpha (513 aa).

169–176 is an ATP binding site; it reads GDRQTGKT.

The protein belongs to the ATPase alpha/beta chains family. In terms of assembly, F-type ATPases have 2 components, CF(1) - the catalytic core - and CF(0) - the membrane proton channel. CF(1) has five subunits: alpha(3), beta(3), gamma(1), delta(1), epsilon(1). CF(0) has three main subunits: a(1), b(2) and c(9-12). The alpha and beta chains form an alternating ring which encloses part of the gamma chain. CF(1) is attached to CF(0) by a central stalk formed by the gamma and epsilon chains, while a peripheral stalk is formed by the delta and b chains.

It localises to the cell inner membrane. It catalyses the reaction ATP + H2O + 4 H(+)(in) = ADP + phosphate + 5 H(+)(out). Functionally, produces ATP from ADP in the presence of a proton gradient across the membrane. The alpha chain is a regulatory subunit. This chain is ATP synthase subunit alpha, found in Shewanella baltica (strain OS223).